The chain runs to 204 residues: Urease accessory protein UreG (204 aa).

15–22 contacts GTP; sequence GPVGSGKT.

The protein belongs to the SIMIBI class G3E GTPase family. UreG subfamily. As to quaternary structure, homodimer. UreD, UreF and UreG form a complex that acts as a GTP-hydrolysis-dependent molecular chaperone, activating the urease apoprotein by helping to assemble the nickel containing metallocenter of UreC. The UreE protein probably delivers the nickel.

The protein localises to the cytoplasm. Its function is as follows. Facilitates the functional incorporation of the urease nickel metallocenter. This process requires GTP hydrolysis, probably effectuated by UreG. In Methylobacterium sp. (strain 4-46), this protein is Urease accessory protein UreG.